The sequence spans 538 residues: Phosphoenolpyruvate carboxykinase (ATP) (538 aa).

The substrate site is built by R64, Y205, and K211. ATP is bound by residues K211, H230, and G246–T254. Mn(2+)-binding residues include K211 and H230. D267 contacts Mn(2+). ATP contacts are provided by residues E295, R331, R447 to I448, and T453. Substrate is bound at residue R331.

The protein belongs to the phosphoenolpyruvate carboxykinase (ATP) family. Monomer. The cofactor is Mn(2+).

The protein resides in the cytoplasm. It carries out the reaction oxaloacetate + ATP = phosphoenolpyruvate + ADP + CO2. It participates in carbohydrate biosynthesis; gluconeogenesis. Functionally, involved in the gluconeogenesis. Catalyzes the conversion of oxaloacetate (OAA) to phosphoenolpyruvate (PEP) through direct phosphoryl transfer between the nucleoside triphosphate and OAA. The polypeptide is Phosphoenolpyruvate carboxykinase (ATP) (Mannheimia succiniciproducens (strain KCTC 0769BP / MBEL55E)).